The following is a 357-amino-acid chain: MNKKPIILGIESSCDETAASIITENEQGMPTILSSIVSSQVDVHKEFGGVVPELAARSHMEKIDLITKKAFDKSGVKMEDLDAIAATAGPGLMVCLSVGLSFGKAMASSLNKPFIAVNHLEGHALSPKLNSELNYPYLLLLISGGHTQFLSVQGLGNYKRLGTTIDDAVGEAFDKTAKLLGIEFPGGPQIEVYAKKGDPNKYELPKPIFHKGGCNLSFAGLKTAVLKISKQIKTEQEKYDLAASFQKTIEEILYKKSKIAFEEFKKMNTINKNKFVVAGGVAANKRIREVLTNLCKEEEFEAIFPPINLCGDNAAMIAMVGLEKFKLKQFSELDSPAKPRWPLDADAAFLKGAGVRL.

Fe cation-binding residues include His-119 and His-123. Residues 141–145 (LISGG), Asp-174, Gly-187, and Asn-284 contribute to the substrate site. Asp-312 provides a ligand contact to Fe cation.

The protein belongs to the KAE1 / TsaD family. It depends on Fe(2+) as a cofactor.

The protein localises to the cytoplasm. The enzyme catalyses L-threonylcarbamoyladenylate + adenosine(37) in tRNA = N(6)-L-threonylcarbamoyladenosine(37) in tRNA + AMP + H(+). Required for the formation of a threonylcarbamoyl group on adenosine at position 37 (t(6)A37) in tRNAs that read codons beginning with adenine. Is involved in the transfer of the threonylcarbamoyl moiety of threonylcarbamoyl-AMP (TC-AMP) to the N6 group of A37, together with TsaE and TsaB. TsaD likely plays a direct catalytic role in this reaction. The chain is tRNA N6-adenosine threonylcarbamoyltransferase from Pelagibacter ubique (strain HTCC1062).